We begin with the raw amino-acid sequence, 462 residues long: uncharacterized protein (462 aa).

Residues 12–70 enclose the TRAM domain; that stretch reads MLKKNDIIQVAISDLSHEGAGVAKHDGFVFFVDNALPEEVIDMRVLKVNKNSGFGKVEA. S-adenosyl-L-methionine is bound by residues Q294, Y323, E344, and D392. The Nucleophile role is filled by C419.

This sequence belongs to the class I-like SAM-binding methyltransferase superfamily. RNA M5U methyltransferase family.

This is an uncharacterized protein from Streptococcus pyogenes serotype M1.